The sequence spans 1050 residues: MQLSLPQILSRRDWENPQITQYHRLEAHPPFHSWRDVESAQKDRPSPQQQTLNGLWSFSYFTQPEAVPEHWVRCDLAEAKPLPVPANWQLHGYDAPIYTNIQYPIPVNPPRVPDLNPTGCYSRDFTLEPSWLASGKTRIIFDGVSSAFYLWCNGQWVGYSQDSRLPAEFDLTPYLQAGSNRIAVLVLRWSDGSYLEDQDMWRMSGIFRDVKLLHKPEIHLRDIHIMTHLSPEFTSANLEVMAAVNIPSLQLNDPQVTGSYQLRVQLWLADKLVASLQQPLGTQAIDERGPYTDRTQLVLRIDQPLLWSAEQPTLYRAVVSLLNHQQELIEAEAYDVGFRQVAIHQGLLKINGKAVLIRGVNRHEHHPQTGQAIDEESLLQDILLMKQHNFNAVRCSHYPNHPLWYRLCDRYGLYVVDEANIETHGMQPMSRLSDDPSWFSAFSERVTRMVQRDRNHPCIIIWSLGNESGHGATHDALYRWIKTNDPTRPVQYEGGGANTLATDILCPMYARVDEDQPFPAVPKWSIKKWIGLPNESRPLILCEYAHAMGNSFGGFARYWQAFRQYPRLQGGFIWDWVDQSLTHHNDHGQPYWAYGGDFGDTPNDRQFCMNGLVFPDRSPHPSLYEAQCAQQFFQFSLLSTTPLVINITSEYLFRESDNEQLYWRIMLEGESVLEGSQPLNLSPESSQCYRLAEKLPTLNKPGQLWLNVEIRQPKETPWSPAQHRSAWHQWRLPQPLFSPSSDLTNATAHYAPQLQHNLQLQHDLQLQQDEQHIKVTYQQQCWQFSRQTGRLAQWWVADKPMLLRPLQDQFVRAPLDNDIGISEATHIDPNAWVERWKKAGMYQLQQRCLSLHVDHLSHSVQISAEYGYEFEQEPLLHSHWVYRFDRHGRMTIDVNVRIATSLPAPARIGMCCQLADISPTVEWLGLGPHENYPDRQLAAQYGHWSLPLEQMHTAYIFPSENGLRCNTHTLNYGRWTLTGDFHFGISRYSTQQLMVTSHQHLLEPEEGTWLNIDGFHMGVGGDDSWSPSVHIDDILTRETYQYQICWQYKV.

Asparagine 100 and aspartate 199 together coordinate substrate. Na(+) is bound at residue aspartate 199. Residues glutamate 422, histidine 424, and glutamate 467 each contribute to the Mg(2+) site. Substrate-binding positions include glutamate 467 and glutamate 543 to histidine 546. The active-site Proton donor is the glutamate 467. Glutamate 543 functions as the Nucleophile in the catalytic mechanism. Asparagine 603 serves as a coordination point for Mg(2+). The Na(+) site is built by phenylalanine 607 and asparagine 610. Substrate is bound by residues asparagine 610 and tryptophan 1025.

The protein belongs to the glycosyl hydrolase 2 family. Homotetramer. The cofactor is Mg(2+). Na(+) serves as cofactor.

The catalysed reaction is Hydrolysis of terminal non-reducing beta-D-galactose residues in beta-D-galactosides.. The protein is Beta-galactosidase of Yersinia pestis bv. Antiqua (strain Angola).